The sequence spans 144 residues: MKLNELKPATGSRSKRLRKGRGLSSGHGFTSGRGTKGQKAHGKTRLGFEGGQMPLYRQIPKRGFTNINRKEYAIVNLASLNKFDDGTEVTPQLLMESGLVKNLKSGIKVLGSGKLEKKLTVKANKFSASAVSAIEAAGGKTEVM.

A disordered region spans residues 1–51 (MKLNELKPATGSRSKRLRKGRGLSSGHGFTSGRGTKGQKAHGKTRLGFEGG). Residues 23 to 35 (LSSGHGFTSGRGT) show a composition bias toward gly residues.

Belongs to the universal ribosomal protein uL15 family. As to quaternary structure, part of the 50S ribosomal subunit.

Functionally, binds to the 23S rRNA. This Limosilactobacillus reuteri (strain DSM 20016) (Lactobacillus reuteri) protein is Large ribosomal subunit protein uL15.